Here is a 629-residue protein sequence, read N- to C-terminus: Dapper homolog 3 (629 aa).

At S6 the chain carries Phosphoserine. Disordered stretches follow at residues 50–76 and 105–574; these read PGMG…RRAA and GGLE…GGLV. Acidic residues predominate over residues 56–69; the sequence is EAEDEEDADEDEDA. Residues 63–87 adopt a coiled-coil conformation; the sequence is ADEDEDAAAARRAAAALEEQLEALP. The segment covering 105–150 has biased composition (low complexity); that stretch reads GGLEQESGRSSGFYEDPSSTGGPDSPPSTFCGDSGFSGSSSYGRLG. 2 positions are modified to phosphoserine: S165 and S239. The residue at position 258 (R258) is an Omega-N-methylarginine. Basic and acidic residues predominate over residues 301 to 311; that stretch reads PAREPSLERVG. The span at 316–335 shows a compositional bias: low complexity; that stretch reads SPAALSRAWASSWESEAAPE. Positions 336 to 348 are enriched in pro residues; that stretch reads PAAPPAAPSPPDS. Residues S426 and S478 each carry the phosphoserine modification. Over residues 525 to 535 the composition is skewed to low complexity; it reads SAGRLGPLGRR. Positions 536 to 546 are enriched in gly residues; sequence GPAGGVGGGYG. Residues 547 to 568 are compositionally biased toward low complexity; the sequence is ESESSASEGESPAFSSASSDSD. The short motif at 626–629 is the PDZ-binding element; it reads MTTV.

It belongs to the dapper family. As to quaternary structure, can form homodimers and heterodimers with DACT1 or DACT3. Interacts with CSNK1D, PKA catalytic subunit, PKC-type kinase, DVL1, DVL3, VANGL1, VANGL2 and CTNND1. Interacts with DVL2.

Its function is as follows. May be involved in regulation of intracellular signaling pathways during development. Specifically thought to play a role in canonical and/or non-canonical Wnt signaling pathways through interaction with DSH (Dishevelled) family proteins. This chain is Dapper homolog 3 (DACT3), found in Homo sapiens (Human).